The chain runs to 1435 residues: Cardiac-enriched FHL2-interacting protein (1435 aa).

Disordered regions lie at residues 109–176 (EEKY…PPKF), 203–234 (SNTHQNSYQPGRKHGEQESSKNPEMACHGSSS), 250–270 (FPSPHHKPVTGEPGRGKGTFL), and 291–311 (KDTAGTVPESKAPKHYGDTTL). A Phosphothreonine modification is found at threonine 120. Residues 133-147 (LRSSNKPVSKVSTLI) are compositionally biased toward polar residues. The segment covering 149–160 (SFDRTESQRCES) has biased composition (basic and acidic residues). The residue at position 323 (serine 323) is a Phosphoserine. 6 disordered regions span residues 362–592 (EGKA…LTLS), 609–772 (AERS…EKEN), 795–847 (SQGE…SPSS), 1007–1108 (PEGD…ARVT), 1138–1261 (SPRG…PGGP), and 1363–1435 (QGPR…EGIS). The segment covering 389 to 402 (KGKESLQDTLEEKT) has biased composition (basic and acidic residues). Serine 470 bears the Phosphoserine mark. Basic and acidic residues-rich tracts occupy residues 479–493 (QEKEPSECQSRDSYK), 522–535 (VLDEKTRGKVDGKQ), 609–620 (AERSSYENKEVE), and 650–667 (CNRDPEPGGATEKMKTHQ). Over residues 668-679 (LENGLSRSVSQE) the composition is skewed to polar residues. The span at 727–741 (KFSTSSSDQSFASFD) shows a compositional bias: low complexity. The span at 751–772 (NQREDRRKDVSAGDSQKDEKEN) shows a compositional bias: basic and acidic residues. Serine 816 is subject to Phosphoserine. Residues 831-847 (KGTTFSQAKDLTPSPSS) show a composition bias toward polar residues. The span at 1055–1066 (NSPNPGSPGESS) shows a compositional bias: low complexity. Positions 1067–1082 (ACSPAASNIWEESSQA) are enriched in polar residues. Positions 1083–1093 (PGGPELLPEEP) are enriched in low complexity. The segment covering 1094 to 1105 (NQASPWASSSPA) has biased composition (polar residues). Residues 1182–1193 (RRAKKLASKRRK) show a composition bias toward basic residues. Residues 1194–1211 (TDQAQEKHGESQEGKPCP) are compositionally biased toward basic and acidic residues. Residues 1424–1435 (DDLEDFATEGIS) show a composition bias toward acidic residues.

Interacts with FHL2. In terms of tissue distribution, expressed in the heart and skeletal muscle.

It localises to the cytoplasm. The protein resides in the myofibril. Its subcellular location is the sarcomere. The protein localises to the z line. Functionally, plays an important role in cardiomyocyte hypertrophy via activation of the calcineurin/NFAT signaling pathway. This Homo sapiens (Human) protein is Cardiac-enriched FHL2-interacting protein.